Reading from the N-terminus, the 144-residue chain is Large ribosomal subunit protein uL15 (144 aa).

Positions Met-1–Pro-56 are disordered. Over residues Arg-21–Ala-31 the composition is skewed to gly residues.

Belongs to the universal ribosomal protein uL15 family. In terms of assembly, part of the 50S ribosomal subunit.

Binds to the 23S rRNA. This Burkholderia ambifaria (strain MC40-6) protein is Large ribosomal subunit protein uL15.